The sequence spans 71 residues: Delta-actitoxin-Avd2b 2 (71 aa).

The signal sequence occupies residues 1-20; the sequence is MNRLLVFLMLGAAFMLVVSA. A propeptide spanning residues 21–41 is cleaved from the precursor; that stretch reads NDAYGDEPAFKDLNQGDESLG. Disulfide bonds link C46-C61, C47-C55, and C49-C66.

Belongs to the sea anemone short toxin (type III) family.

It is found in the secreted. The protein resides in the nematocyst. Voltage-gated sodium channel (Nav) inhibitor. 1 uM completely inhibits insect voltage-gated sodium channel inactivation (DmNav1 from D.melanogaster). This chain is Delta-actitoxin-Avd2b 2, found in Anemonia viridis (Snakelocks anemone).